Here is a 294-residue protein sequence, read N- to C-terminus: MRFVIVTGLSGAGKTQATRSLEDLGYFCVDNLPPKLINKFAELCSQGDGKIDKVALVIDIRGGVFFDDLFETLNYLKENEFKYEILFLDASDEVLIKRFKESRRSHPLSPDGRVLNGIIQERSKLREIKDRADIIIDTSKYAIRDLREKMNEHYGDNIESEKQLSITVLSFGFKYGIPVDSDLVFDVRFIPNPFYIPELKQYSGNDKSVKDYVLKQEETITFVEKLQDMLEYLVPNYIKEGKRQLIISIGCTGGRHRSVAIANEIYERLNKGNYKAKIEHRDVGEDLHRGEKKL.

8 to 15 (GLSGAGKT) is an ATP binding site. GTP is bound at residue 59–62 (DIRG).

This sequence belongs to the RapZ-like family.

In terms of biological role, displays ATPase and GTPase activities. The chain is Nucleotide-binding protein CLL_A3342 from Clostridium botulinum (strain Eklund 17B / Type B).